We begin with the raw amino-acid sequence, 198 residues long: 3-isopropylmalate dehydratase small subunit (198 aa).

The protein belongs to the LeuD family. LeuD type 1 subfamily. Heterodimer of LeuC and LeuD.

The catalysed reaction is (2R,3S)-3-isopropylmalate = (2S)-2-isopropylmalate. The protein operates within amino-acid biosynthesis; L-leucine biosynthesis; L-leucine from 3-methyl-2-oxobutanoate: step 2/4. Functionally, catalyzes the isomerization between 2-isopropylmalate and 3-isopropylmalate, via the formation of 2-isopropylmaleate. This is 3-isopropylmalate dehydratase small subunit from Mycobacterium marinum (strain ATCC BAA-535 / M).